Reading from the N-terminus, the 119-residue chain is MKVAVVLIVVLVVMMIGQETDSWRIRIRRGRKIFRKIRPYIPFVIGAVGKRQAGDAEFQAKYNAAAEDGVFTDEEIKSVFGVDDNGFVEFKATYDVDGDGVVQVEEYETVVELTENLAG.

Positions 1–22 are cleaved as a signal peptide; sequence MKVAVVLIVVLVVMMIGQETDS. Residues 82 to 117 form the EF-hand domain; it reads VDDNGFVEFKATYDVDGDGVVQVEEYETVVELTENL. Residues aspartate 95, aspartate 97, aspartate 99, and glutamate 106 each contribute to the Ca(2+) site.

In terms of tissue distribution, component of the acid-soluble organic matrix of calcified layers of the shell (at protein level).

The protein resides in the secreted. The chain is EF-hand calcium-binding domain-containing protein 2 from Lottia gigantea (Giant owl limpet).